Consider the following 83-residue polypeptide: U-actitoxin-Aeq6a (83 aa).

The N-terminal stretch at 1-20 (MIYKAVFVCLVLVLLGDVFC) is a signal peptide. The propeptide occupies 21 to 36 (SPRNSGGGTLNDNPFE). At proline 82 the chain carries Proline amide.

Contains 3 disulfide bonds. In terms of tissue distribution, expressed by acrorhagi.

It localises to the secreted. The protein localises to the nematocyst. Toxin. In Actinia equina (Beadlet anemone), this protein is U-actitoxin-Aeq6a.